Consider the following 714-residue polypeptide: Calpain-1 catalytic subunit (714 aa).

Positions 55–354 (LFRDEAFPPV…FTRLEICNLT (300 aa)) constitute a Calpain catalytic domain. Residues Gln109 and Asp114 each contribute to the Ca(2+) site. Residues Cys115, His272, and Asn296 contribute to the active site. Residues Asp318 and Asp323 each contribute to the Ca(2+) site. The residue at position 354 (Thr354) is a Phosphothreonine. The interval 355-526 (PDALKSQRVR…KKAGTQELDD (172 aa)) is domain III. The linker stretch occupies residues 527–542 (QVQAILPDEQVLSEEE). The tract at residues 543–713 (IDENFKALFR…LFKWLQLTMF (171 aa)) is domain IV. EF-hand domains follow at residues 585-618 (FSLESCRSMVNLMDRDGNGKLGLVEFNILWNRIR), 615-650 (NRIRNYLSIFRKFDLDKSGSMSAYEMRMAIESAGFK), and 680-714 (VRLETMFRFFKTLDTDLDGVVTFDLFKWLQLTMFA). Asp598, Asp600, Asn602, Lys604, Glu609, Asp628, Asp630, Ser632, Ser634, and Glu639 together coordinate Ca(2+).

It belongs to the peptidase C2 family. In terms of assembly, forms a heterodimer with a small (regulatory) subunit CAPNS1. Requires Ca(2+) as cofactor. Undergoes calcium-induced successive autoproteolytic cleavages that generate a membrane-bound 78 kDa active form and an intracellular 75 kDa active form. Calpastatin reduces with high efficiency the transition from 78 kDa to 75 kDa calpain forms.

The protein localises to the cytoplasm. Its subcellular location is the cell membrane. The catalysed reaction is Broad endopeptidase specificity.. Activated by micromolar concentrations of calcium and inhibited by calpastatin. In terms of biological role, calcium-regulated non-lysosomal thiol-protease which catalyzes limited proteolysis of substrates involved in cytoskeletal remodeling and signal transduction. Proteolytically cleaves CTBP1. Cleaves and activates caspase-7 (CASP7). This Sus scrofa (Pig) protein is Calpain-1 catalytic subunit.